A 294-amino-acid polypeptide reads, in one-letter code: MASSREIRNKIKSIKNTQKITRAMEMVAASKMRKAQDRMKKARPYGEKIRNVAAHMSKASVEYRHPFLIDRNSVKRVGIIVVTSDKGLCGGLNTNVLRRALNEIRVWGAEGEQIEVCCIGNKGLGFMSRLGVRVISQVTGLGDAPNMEKLIGAVKVVLDAYTDDHFDRVYIFYNRFVNTMKQIPVMEQLLPLTDEHMRDDGNEAKPARAPWDYIYEPEAKPVIDDIMIRYIEALVYQAVAENMASEQSARMVAMKAASDNAGNLIDELTLIYNKSRQAAITKELSEIVGGAAAV.

This sequence belongs to the ATPase gamma chain family. F-type ATPases have 2 components, CF(1) - the catalytic core - and CF(0) - the membrane proton channel. CF(1) has five subunits: alpha(3), beta(3), gamma(1), delta(1), epsilon(1). CF(0) has three main subunits: a, b and c.

It localises to the cell inner membrane. Its function is as follows. Produces ATP from ADP in the presence of a proton gradient across the membrane. The gamma chain is believed to be important in regulating ATPase activity and the flow of protons through the CF(0) complex. This Nitrosomonas eutropha (strain DSM 101675 / C91 / Nm57) protein is ATP synthase gamma chain.